The chain runs to 150 residues: Large ribosomal subunit protein uL15 (150 aa).

A disordered region spans residues 1–51 (MKLHTLRPAKGSVKTSKRIGRGTGSGRGGTSTKGHKGAKSRSGYSSKIGFE). Residues 21 to 31 (RGTGSGRGGTS) show a composition bias toward gly residues.

The protein belongs to the universal ribosomal protein uL15 family. As to quaternary structure, part of the 50S ribosomal subunit.

Functionally, binds to the 23S rRNA. The polypeptide is Large ribosomal subunit protein uL15 (Cytophaga hutchinsonii (strain ATCC 33406 / DSM 1761 / CIP 103989 / NBRC 15051 / NCIMB 9469 / D465)).